The primary structure comprises 152 residues: Protein FERTILITY RESTORER RF2, mitochondrial (152 aa).

A mitochondrion-targeting transit peptide spans 1–52 (MSTLVTCSLPGAVTTHASTRRFGGSQFQTSQASCISFKREVSAKAVLRSVRC). Residues 52–69 (CNATQTQSAQRKSSTATV) are compositionally biased toward polar residues. A disordered region spans residues 52–99 (CNATQTQSAQRKSSTATVKRSDPKGKIQGPKLDDGSGGFPPFRFGKGG).

It is found in the mitochondrion. Functionally, restores fertility in rice varieties with LD-type cytoplasmic male sterility (CMS). CMS is caused by genetic incompatibility between nuclei and mitochondria within male reproductive organs. Corresponds to the functional allele of RF2, which is dependent of the presence of Ile-78 in the japonica cultivars Fukuyama and Owarihatamochi (AC F1SZ42), and indica cultivar Kasalath (AC F1SZ41). Non-functional RF2 alleles are found in japonica cultivars Taichung 65 and Nipponbare (AC F1SZ44), where Ile-78 is replaced by Thr-78. This is Protein FERTILITY RESTORER RF2, mitochondrial from Oryza sativa subsp. japonica (Rice).